A 708-amino-acid chain; its full sequence is Glycine--tRNA ligase beta subunit (708 aa).

The protein belongs to the class-II aminoacyl-tRNA synthetase family. In terms of assembly, tetramer of two alpha and two beta subunits.

It is found in the cytoplasm. The enzyme catalyses tRNA(Gly) + glycine + ATP = glycyl-tRNA(Gly) + AMP + diphosphate. This chain is Glycine--tRNA ligase beta subunit, found in Methylobacillus flagellatus (strain ATCC 51484 / DSM 6875 / VKM B-1610 / KT).